A 286-amino-acid polypeptide reads, in one-letter code: Bifunctional protein FolD (286 aa).

NADP(+)-binding positions include 165-167 (GRS) and S190.

This sequence belongs to the tetrahydrofolate dehydrogenase/cyclohydrolase family. As to quaternary structure, homodimer.

The enzyme catalyses (6R)-5,10-methylene-5,6,7,8-tetrahydrofolate + NADP(+) = (6R)-5,10-methenyltetrahydrofolate + NADPH. It catalyses the reaction (6R)-5,10-methenyltetrahydrofolate + H2O = (6R)-10-formyltetrahydrofolate + H(+). It functions in the pathway one-carbon metabolism; tetrahydrofolate interconversion. Functionally, catalyzes the oxidation of 5,10-methylenetetrahydrofolate to 5,10-methenyltetrahydrofolate and then the hydrolysis of 5,10-methenyltetrahydrofolate to 10-formyltetrahydrofolate. This chain is Bifunctional protein FolD, found in Staphylococcus aureus (strain USA300).